Here is a 501-residue protein sequence, read N- to C-terminus: DNA nucleotidylexotransferase (501 aa).

The short motif at 11–17 is the Nuclear localization signal element; the sequence is KKRKRPV. Residues 24–121 form the BRCT domain; it reads QVEVKFKEVT…RPVRVETRHS (98 aa). The interval 249 to 253 is involved in DNA binding; the sequence is VGPKT. Residues 324–329 and 333–336 each bind a 2'-deoxyribonucleoside 5'-triphosphate; these read GFRRGK and HDVD. The Mg(2+) site is built by Asp334, Asp336, and Asp426. 441–442 provides a ligand contact to a 2'-deoxyribonucleoside 5'-triphosphate; that stretch reads GW.

This sequence belongs to the DNA polymerase type-X family. Mg(2+) serves as cofactor.

It is found in the nucleus. It carries out the reaction DNA(n) + a 2'-deoxyribonucleoside 5'-triphosphate = DNA(n+1) + diphosphate. Its function is as follows. Template-independent DNA polymerase which catalyzes the random addition of deoxynucleoside 5'-triphosphate to the 3'-end of a DNA initiator. One of the in vivo functions of this enzyme is the addition of nucleotides at the junction (N region) of rearranged Ig heavy chain and T-cell receptor gene segments during the maturation of B- and T-cells. This is DNA nucleotidylexotransferase (dntt) from Oncorhynchus mykiss (Rainbow trout).